Reading from the N-terminus, the 640-residue chain is Phosphomethylpyrimidine synthase (640 aa).

Residues asparagine 235, methionine 264, tyrosine 293, histidine 329, 349 to 351 (SRG), 390 to 393 (DGLR), and glutamate 429 contribute to the substrate site. A Zn(2+)-binding site is contributed by histidine 433. Residue tyrosine 456 coordinates substrate. Histidine 497 serves as a coordination point for Zn(2+). Residues cysteine 577, cysteine 580, and cysteine 585 each coordinate [4Fe-4S] cluster.

This sequence belongs to the ThiC family. As to quaternary structure, homodimer. The cofactor is [4Fe-4S] cluster.

The enzyme catalyses 5-amino-1-(5-phospho-beta-D-ribosyl)imidazole + S-adenosyl-L-methionine = 4-amino-2-methyl-5-(phosphooxymethyl)pyrimidine + CO + 5'-deoxyadenosine + formate + L-methionine + 3 H(+). Its pathway is cofactor biosynthesis; thiamine diphosphate biosynthesis. Catalyzes the synthesis of the hydroxymethylpyrimidine phosphate (HMP-P) moiety of thiamine from aminoimidazole ribotide (AIR) in a radical S-adenosyl-L-methionine (SAM)-dependent reaction. This chain is Phosphomethylpyrimidine synthase, found in Photobacterium profundum (strain SS9).